The sequence spans 184 residues: Alpha-tubulin N-acetyltransferase (184 aa).

The N-acetyltransferase domain occupies 1–174; the sequence is MNIPPEKMHN…NNFVIFAEYF (174 aa). Residues 108-121 and 144-153 contribute to the acetyl-CoA site; these read FYIQRNFRKRGLGL and SYKLQSFLKK.

The protein belongs to the acetyltransferase ATAT1 family.

The catalysed reaction is L-lysyl-[alpha-tubulin] + acetyl-CoA = N(6)-acetyl-L-lysyl-[alpha-tubulin] + CoA + H(+). In terms of biological role, specifically acetylates 'Lys-40' in alpha-tubulin on the lumenal side of microtubules. Promotes microtubule destabilization and accelerates microtubule dynamics; this activity may be independent of acetylation activity. Acetylates alpha-tubulin with a slow enzymatic rate, due to a catalytic site that is not optimized for acetyl transfer. Enters the microtubule through each end and diffuses quickly throughout the lumen of microtubules. Acetylates only long/old microtubules because of its slow acetylation rate since it does not have time to act on dynamically unstable microtubules before the enzyme is released. This Plasmodium knowlesi (strain H) protein is Alpha-tubulin N-acetyltransferase.